A 259-amino-acid polypeptide reads, in one-letter code: 7alpha-hydroxysteroid dehydrogenase (259 aa).

Residues isoleucine 18, 37–38 (DY), and asparagine 90 contribute to the NAD(+) site. Positions 145 and 158 each coordinate glycochenodeoxycholate. Residues tyrosine 158, lysine 162, and 191–193 (ILT) contribute to the NAD(+) site. Tyrosine 158 (proton acceptor) is an active-site residue.

Belongs to the short-chain dehydrogenases/reductases (SDR) family. As to quaternary structure, homotetramer.

The enzyme catalyses cholate + NAD(+) = 3alpha,12alpha-dihydroxy-7-oxo-5beta-cholanate + NADH + H(+). The catalysed reaction is chenodeoxycholate + NAD(+) = 7-oxolithocholate + NADH + H(+). It catalyses the reaction taurochenodeoxycholate + NAD(+) = 7-oxotaurolithocholate + NADH + H(+). It carries out the reaction glycochenodeoxycholate + NAD(+) = 7-oxoglycolithocholate + NADH + H(+). The enzyme catalyses taurocholate + NAD(+) = 7-oxo-taurodeoxycholate + NADH + H(+). The catalysed reaction is glycocholate + NAD(+) = 7-oxo-glycodeoxycholate + NADH + H(+). It catalyses the reaction an aromatic primary alcohol + NAD(+) = an aromatic aldehyde + NADH + H(+). It carries out the reaction benzyl alcohol + NAD(+) = benzaldehyde + NADH + H(+). The enzyme catalyses 4-cyanobenzyl alcohol + NAD(+) = 4-cyanobenzaldehyde + NADH + H(+). The catalysed reaction is 4-acetoxybenzyl alcohol + NAD(+) = 4-acetoxybenzaldehyde + NADH + H(+). It catalyses the reaction 4-(trifluoromethyl)benzyl alcohol + NAD(+) = 4-(trifluoromethyl)benzaldehyde + NADH + H(+). 7alpha-hydroxysteroid dehydrogenase involved in the metabolism of bile acids in the gut. Catalyzes the NAD(+)-dependent oxidation of the 7alpha-hydroxy group of 7alpha-hydroxysteroids, such as cholate, chenodeoxycholate, taurochenodeoxycholate, glycochenodeoxycholate, taurocholate and glycocholate, to the corresponding 7-oxosteroids. Since it is also able to catalyze the reduction of nonsteroidal carbonyl compounds such as various benzaldehyde analogs to their corresponding benzyl alcohols, this enzyme may also function in the detoxification of xenobiotics containing carbonyl groups in the large intestine. The chain is 7alpha-hydroxysteroid dehydrogenase from Bacteroides fragilis (strain ATCC 25285 / DSM 2151 / CCUG 4856 / JCM 11019 / LMG 10263 / NCTC 9343 / Onslow / VPI 2553 / EN-2).